Here is a 100-residue protein sequence, read N- to C-terminus: Mitochondrial zinc maintenance protein 1, mitochondrial (100 aa).

This sequence belongs to the complex I LYR family. MZM1 subfamily. In terms of assembly, interacts with RIP1.

The protein localises to the mitochondrion matrix. Its function is as follows. Assembly factor required for Rieske Fe-S protein RIP1 incorporation into the cytochrome b-c1 (CIII) complex. Functions as a chaperone, binding to this subunit within the mitochondrial matrix and stabilizing it prior to its translocation and insertion into the late CIII dimeric intermediate within the mitochondrial inner membrane. Modulates the mitochondrial matrix zinc pool. This chain is Mitochondrial zinc maintenance protein 1, mitochondrial (new18), found in Schizosaccharomyces pombe (strain 972 / ATCC 24843) (Fission yeast).